The primary structure comprises 307 residues: Ribosomal RNA small subunit methyltransferase H (307 aa).

S-adenosyl-L-methionine contacts are provided by residues 33–35 (GGY), Asp51, Phe82, Asp96, and Gln103.

The protein belongs to the methyltransferase superfamily. RsmH family.

The protein localises to the cytoplasm. The enzyme catalyses cytidine(1402) in 16S rRNA + S-adenosyl-L-methionine = N(4)-methylcytidine(1402) in 16S rRNA + S-adenosyl-L-homocysteine + H(+). In terms of biological role, specifically methylates the N4 position of cytidine in position 1402 (C1402) of 16S rRNA. This Rickettsia peacockii (strain Rustic) protein is Ribosomal RNA small subunit methyltransferase H.